Here is a 288-residue protein sequence, read N- to C-terminus: RELT-like protein 1 (288 aa).

A signal peptide spans 1–23 (MAPPAASGIPSIAPSLGPTAVWL). Residues 24-57 (GNRSDLGDVQALASRDLPTTTVTAGNNNKPEHLE) are Extracellular-facing. Asn25 carries N-linked (GlcNAc...) asparagine glycosylation. The chain crosses the membrane as a helical span at residues 58–78 (YVAFVLVPVFFIMGLLGILIC). At 79–288 (HVLKKKGYRC…EGTQERRSSE (210 aa)) the chain is on the cytoplasmic side. Disordered regions lie at residues 145 to 172 (FEPE…GAAS) and 237 to 288 (HKSN…RSSE). Over residues 152-172 (SPNAPGSPTSPGSPLSPGAAS) the composition is skewed to low complexity. A compositionally biased stretch (basic and acidic residues) spans 237 to 246 (HKSNSKERKS).

Belongs to the RELT family.

Its subcellular location is the cell membrane. The protein is RELT-like protein 1 (RELL1) of Gallus gallus (Chicken).